The following is a 207-amino-acid chain: LexA repressor (207 aa).

The segment at residues Val28–Ala48 is a DNA-binding region (H-T-H motif). Catalysis depends on for autocatalytic cleavage activity residues Ser129 and Lys167.

The protein belongs to the peptidase S24 family. Homodimer.

It carries out the reaction Hydrolysis of Ala-|-Gly bond in repressor LexA.. Represses a number of genes involved in the response to DNA damage (SOS response), including recA and lexA. In the presence of single-stranded DNA, RecA interacts with LexA causing an autocatalytic cleavage which disrupts the DNA-binding part of LexA, leading to derepression of the SOS regulon and eventually DNA repair. The protein is LexA repressor of Bacillus licheniformis (strain ATCC 14580 / DSM 13 / JCM 2505 / CCUG 7422 / NBRC 12200 / NCIMB 9375 / NCTC 10341 / NRRL NRS-1264 / Gibson 46).